Consider the following 310-residue polypeptide: MSTTTGAFIAGGVAACGAVTVTHSFETVKIRLQLQGELQAKQDAAKKYRGVLHGVKVILQNEGPRGLFRGIGSAYIYQVLLNGCRLGFYEPLRQGLATTIYQDAQVQSLGINVLAGAASGIIGAAAGSPFFLVKTRLQSFSPFLPVGTQHNYKNSFDGLRKIHTSEGVSGLYRGVGAAMVRTGFGSSVQLPTYFFAKRRLMKHLGMEDGPGLHLASSTASGFVVCCVMHPPDTIMSRMYNQTGNLYKGVFDCLFKTIKTEGVLAIYKGYFAHLARILPHTILTLSLAEQTNKIMRRLEDRFLSDSLKENL.

Solcar repeat units follow at residues 2 to 95 (STTT…LRQG), 107 to 199 (QSLG…AKRR), and 208 to 293 (DGPG…TNKI). 6 helical membrane-spanning segments follow: residues 8–28 (FIAGGVAACGAVTVTHSFETV), 72–92 (GSAYIYQVLLNGCRLGFYEPL), 114–133 (LAGAASGIIGAAAGSPFFLV), 178–198 (AMVRTGFGSSVQLPTYFFAKR), 211–228 (GLHLASSTASGFVVCCVM), and 265–286 (IYKGYFAHLARILPHTILTLSL).

This sequence belongs to the mitochondrial carrier (TC 2.A.29) family.

It is found in the mitochondrion inner membrane. Mitochondrial transporter that does not mediate citrate export from mitochondria to cytoplasm. Its exact function has still to be determined. The chain is Mitochondrial citrate transporter E from Aspergillus niger (strain ATCC 1015 / CBS 113.46 / FGSC A1144 / LSHB Ac4 / NCTC 3858a / NRRL 328 / USDA 3528.7).